We begin with the raw amino-acid sequence, 191 residues long: Protein LIGHT-DEPENDENT SHORT HYPOCOTYLS 9 (191 aa).

Positions 1-14 (MSSDRHTPTKDPPD) are enriched in basic and acidic residues. Disordered stretches follow at residues 1–41 (MSSD…YESQ) and 153–191 (QAKARGIPYRKKKRRKTKNEVVVVKKDVANSSTPNQSFT). The ALOG domain maps to 37–165 (RYESQKRRDW…ARGIPYRKKK (129 aa)). Residues 160-169 (PYRKKKRRKT) show a composition bias toward basic residues. The short motif at 163–167 (KKKRR) is the Nuclear localization signal element. The segment covering 181–191 (ANSSTPNQSFT) has biased composition (polar residues).

Belongs to the plant homeotic and developmental regulators ALOG protein family.

It localises to the nucleus. Probable transcription regulator that acts as a developmental regulator by promoting cell growth in response to light. This is Protein LIGHT-DEPENDENT SHORT HYPOCOTYLS 9 (LSH9) from Arabidopsis thaliana (Mouse-ear cress).